Here is a 63-residue protein sequence, read N- to C-terminus: ATPase inhibitor, mitochondrial (63 aa).

Residues 1 to 23 (TAGATGATRQDGSTDAFEKREKA) form a disordered region. Positions 18–62 (EKREKAQEDLYIRQHEKEQLEALKESLKKQKKSLDDLEBKIDDLT) form a coiled coil.

This sequence belongs to the ATPase inhibitor family.

Its subcellular location is the mitochondrion. In terms of biological role, this protein forms a one-to-one complex with ATPase to inhibit the enzyme activity completely. This is ATPase inhibitor, mitochondrial from Cyberlindnera jadinii (Torula yeast).